Here is a 492-residue protein sequence, read N- to C-terminus: Catalase isozyme 2 (492 aa).

Catalysis depends on residues His-65 and Asn-138. Tyr-348 lines the heme pocket.

This sequence belongs to the catalase family. In terms of assembly, homotetramer. It depends on heme as a cofactor.

It is found in the peroxisome. It catalyses the reaction 2 H2O2 = O2 + 2 H2O. In terms of biological role, occurs in almost all aerobically respiring organisms and serves to protect cells from the toxic effects of hydrogen peroxide. In Gossypium hirsutum (Upland cotton), this protein is Catalase isozyme 2 (CAT2).